Reading from the N-terminus, the 396-residue chain is NADH-quinone oxidoreductase subunit D 1 (396 aa).

This sequence belongs to the complex I 49 kDa subunit family. In terms of assembly, NDH-1 is composed of 14 different subunits. Subunits NuoB, C, D, E, F, and G constitute the peripheral sector of the complex.

The protein localises to the cell inner membrane. The catalysed reaction is a quinone + NADH + 5 H(+)(in) = a quinol + NAD(+) + 4 H(+)(out). In terms of biological role, NDH-1 shuttles electrons from NADH, via FMN and iron-sulfur (Fe-S) centers, to quinones in the respiratory chain. The immediate electron acceptor for the enzyme in this species is believed to be ubiquinone. Couples the redox reaction to proton translocation (for every two electrons transferred, four hydrogen ions are translocated across the cytoplasmic membrane), and thus conserves the redox energy in a proton gradient. The chain is NADH-quinone oxidoreductase subunit D 1 from Beijerinckia indica subsp. indica (strain ATCC 9039 / DSM 1715 / NCIMB 8712).